A 352-amino-acid polypeptide reads, in one-letter code: Tubby-like F-box protein 10 (352 aa).

The segment covering 1–11 has biased composition (basic and acidic residues); sequence MAAVREPREEA. Residues 1 to 23 are disordered; that stretch reads MAAVREPREEAAVGEGEGEEEGR. The F-box domain occupies 22 to 78; sequence GRWGGLLPELVEEVVRRVEASGGERWPARKDLVSCACVCRRWREAAAAVVRPLPESG.

It belongs to the TUB family. As to expression, ubiquitous.

This is Tubby-like F-box protein 10 (TULP10) from Oryza sativa subsp. japonica (Rice).